A 381-amino-acid chain; its full sequence is Selenoprotein P (381 aa).

An N-terminal signal peptide occupies residues Met-1–Thr-19. The N-linked (GlcNAc...) asparagine glycan is linked to Asn-46. Position 59 (Sec-59) is a non-standard amino acid, selenocysteine. Asn-83, Asn-119, and Asn-128 each carry an N-linked (GlcNAc...) asparagine glycan. The disordered stretch occupies residues Ser-202–Asp-268. Residues His-204–His-217 are compositionally biased toward basic residues. A compositionally biased stretch (polar residues) spans Leu-218 to Pro-229. The segment covering Leu-243–Gln-255 has biased composition (basic residues). Ser-266 carries the phosphoserine modification. 2 non-standard amino acids (selenocysteine) are found at residues Sec-318 and Sec-330. Asn-338 carries an N-linked (GlcNAc...) asparagine glycan. Non-standard amino acids (selenocysteine) are located at Sec-345, Sec-352, Sec-367, Sec-369, Sec-376, and Sec-378. Residues Sec-352–Asn-381 are disordered. Residues Gln-353–Sec-369 are compositionally biased toward polar residues.

This sequence belongs to the selenoprotein P family. Post-translationally, phosphorylation sites are present in the extracellular medium.

The protein resides in the secreted. Its function is as follows. Might be responsible for some of the extracellular antioxidant defense properties of selenium or might be involved in the transport of selenium. May supply selenium to tissues such as brain and testis. The chain is Selenoprotein P from Pongo abelii (Sumatran orangutan).